The sequence spans 103 residues: Integration host factor subunit alpha (103 aa).

The disordered stretch occupies residues 51 to 73 (FGNFQLRDKPQRPGRNPKTGEEI).

The protein belongs to the bacterial histone-like protein family. Heterodimer of an alpha and a beta chain.

In terms of biological role, this protein is one of the two subunits of integration host factor, a specific DNA-binding protein that functions in genetic recombination as well as in transcriptional and translational control. This Azoarcus sp. (strain BH72) protein is Integration host factor subunit alpha.